A 375-amino-acid chain; its full sequence is Trichodiene synthase (375 aa).

This sequence belongs to the trichodiene synthase family.

The catalysed reaction is (2E,6E)-farnesyl diphosphate = trichodiene + diphosphate. It functions in the pathway sesquiterpene biosynthesis; trichothecene biosynthesis. Functionally, TS is a member of the terpene cyclase group of enzymes. It catalyzes the isomerization and cyclization of farnesyl pyro-phosphate to form trichodiene, the first cyclic intermediate in the biosynthetic pathway for trichothecenes. It serves to branch trichothecene biosynthesis from the isoprenoid pathway. The sequence is that of Trichodiene synthase (TRI5) from Fusarium culmorum.